A 305-amino-acid chain; its full sequence is Methionyl-tRNA formyltransferase (305 aa).

Residue 111–114 coordinates (6S)-5,6,7,8-tetrahydrofolate; the sequence is SLLP.

Belongs to the Fmt family.

The catalysed reaction is L-methionyl-tRNA(fMet) + (6R)-10-formyltetrahydrofolate = N-formyl-L-methionyl-tRNA(fMet) + (6S)-5,6,7,8-tetrahydrofolate + H(+). Its function is as follows. Attaches a formyl group to the free amino group of methionyl-tRNA(fMet). The formyl group appears to play a dual role in the initiator identity of N-formylmethionyl-tRNA by promoting its recognition by IF2 and preventing the misappropriation of this tRNA by the elongation apparatus. The sequence is that of Methionyl-tRNA formyltransferase from Campylobacter jejuni subsp. jejuni serotype O:2 (strain ATCC 700819 / NCTC 11168).